Here is a 321-residue protein sequence, read N- to C-terminus: Methionyl-tRNA formyltransferase (321 aa).

Residue 111–114 participates in (6S)-5,6,7,8-tetrahydrofolate binding; the sequence is GLLP.

The protein belongs to the Fmt family.

The catalysed reaction is L-methionyl-tRNA(fMet) + (6R)-10-formyltetrahydrofolate = N-formyl-L-methionyl-tRNA(fMet) + (6S)-5,6,7,8-tetrahydrofolate + H(+). In terms of biological role, attaches a formyl group to the free amino group of methionyl-tRNA(fMet). The formyl group appears to play a dual role in the initiator identity of N-formylmethionyl-tRNA by promoting its recognition by IF2 and preventing the misappropriation of this tRNA by the elongation apparatus. This is Methionyl-tRNA formyltransferase from Chlamydia pneumoniae (Chlamydophila pneumoniae).